A 492-amino-acid polypeptide reads, in one-letter code: MTLWINGDWVTGQGALRVKRNPVSGEVLWQGNDADAAQVGQACRAARAAFPRWARLSFGDRQVRVERFAGLLESNKAELTAIIARETGKPRWEAATEVTAMINKIAISIKAYHVRTGEQRSEMPDGAASLRHRPHGVLAVFGPYNFPGHLPNGHIVPALLAGNTIIFKPSELTPWSGEAVMRLWQQAGLPPGVLNLVQGGRATGQALSALEDLDGLLFTGSANTGYQLHRQLSGQPEKILALEMGGNNPLIIDEVADIDAAVHLTIQSAFVTAGQRCTCARRLFLKSGTQGDAFLARMVAVSQRLTPGTWDDEPQPFIGGLISEQAAQQVVTAWQELEAMGGRTLLAPRLLQAGTSLLTPGIIEMTGVTGVPDEEVFGPLLRVWRYDNFDEAIRMANNTRFGLSCGLVSPEREKFDQLLLGARAGIVNWNKPLTGAASTAPFGGIGASGNHRPSAWYAADYCAWPMASLESDSLTLPATLNPGLDFSDEVVR.

220–225 is an NAD(+) binding site; the sequence is GSANTG. Residues E243 and C277 contribute to the active site.

Belongs to the aldehyde dehydrogenase family. AstD subfamily.

It catalyses the reaction N-succinyl-L-glutamate 5-semialdehyde + NAD(+) + H2O = N-succinyl-L-glutamate + NADH + 2 H(+). Its pathway is amino-acid degradation; L-arginine degradation via AST pathway; L-glutamate and succinate from L-arginine: step 4/5. Its function is as follows. Catalyzes the NAD-dependent reduction of succinylglutamate semialdehyde into succinylglutamate. This is N-succinylglutamate 5-semialdehyde dehydrogenase from Escherichia coli O6:H1 (strain CFT073 / ATCC 700928 / UPEC).